Consider the following 109-residue polypeptide: CRISPR-associated endoribonuclease Cas2 (109 aa).

Asp-8 is a Mg(2+) binding site.

It belongs to the CRISPR-associated endoribonuclease Cas2 protein family. As to quaternary structure, homodimer, forms a heterotetramer with a Cas1 homodimer. Mg(2+) serves as cofactor.

Its function is as follows. CRISPR (clustered regularly interspaced short palindromic repeat), is an adaptive immune system that provides protection against mobile genetic elements (viruses, transposable elements and conjugative plasmids). CRISPR clusters contain sequences complementary to antecedent mobile elements and target invading nucleic acids. CRISPR clusters are transcribed and processed into CRISPR RNA (crRNA). Functions as a ssRNA-specific endoribonuclease. Involved in the integration of spacer DNA into the CRISPR cassette. The sequence is that of CRISPR-associated endoribonuclease Cas2 from Streptococcus mutans serotype c (strain ATCC 700610 / UA159).